The chain runs to 65 residues: Large ribosomal subunit protein bL35 (65 aa).

Residues Met1 to Arg15 show a composition bias toward basic residues. The interval Met1–Asn28 is disordered.

The protein belongs to the bacterial ribosomal protein bL35 family.

In Cyanothece sp. (strain PCC 7425 / ATCC 29141), this protein is Large ribosomal subunit protein bL35.